A 927-amino-acid polypeptide reads, in one-letter code: Translation initiation factor IF-2 (927 aa).

The disordered stretch occupies residues 27–338; the sequence is LGLPVKSHAS…APKPVTERKF (312 aa). Polar residues predominate over residues 49-69; the sequence is SFSSSKTKAPTNSVQTNQGVK. 2 stretches are compositionally biased toward basic and acidic residues: residues 70-86 and 101-138; these read TESK…DDKP and FKAE…DRRH. The span at 146–159 shows a compositional bias: low complexity; sequence GNRNDNRQGQQNNR. Composition is skewed to basic and acidic residues over residues 160–171, 202–226, and 234–257; these read NKNDGRYADHKQ, YSRH…EQEL, and AQEE…KEIV. Positions 300-316 are enriched in low complexity; it reads NWNNQNQVRNQRNSNWN. Positions 428 to 597 constitute a tr-type G domain; the sequence is ERPPVVTIMG…LLVAEMEELK (170 aa). A G1 region spans residues 437–444; it reads GHVDHGKT. 437–444 serves as a coordination point for GTP; the sequence is GHVDHGKT. Positions 462–466 are G2; the sequence is GITQH. The interval 483–486 is G3; that stretch reads DTPG. GTP contacts are provided by residues 483–487 and 537–540; these read DTPGH and NKID. The segment at 537-540 is G4; sequence NKID. Positions 573 to 575 are G5; it reads SAK.

It belongs to the TRAFAC class translation factor GTPase superfamily. Classic translation factor GTPase family. IF-2 subfamily.

The protein localises to the cytoplasm. Functionally, one of the essential components for the initiation of protein synthesis. Protects formylmethionyl-tRNA from spontaneous hydrolysis and promotes its binding to the 30S ribosomal subunits. Also involved in the hydrolysis of GTP during the formation of the 70S ribosomal complex. This is Translation initiation factor IF-2 from Streptococcus agalactiae serotype Ia (strain ATCC 27591 / A909 / CDC SS700).